We begin with the raw amino-acid sequence, 79 residues long: uncharacterized protein (79 aa).

The tract at residues 1–37 is disordered; that stretch reads MQLDVFSRMMFGDAAKPTEEKEEEQQEEVSQVSQTND.

This is an uncharacterized protein from Bacillus subtilis (strain 168).